A 140-amino-acid chain; its full sequence is 3-hydroxyacyl-[acyl-carrier-protein] dehydratase FabZ (140 aa).

Histidine 47 is an active-site residue.

It belongs to the thioester dehydratase family. FabZ subfamily.

The protein resides in the cytoplasm. The enzyme catalyses a (3R)-hydroxyacyl-[ACP] = a (2E)-enoyl-[ACP] + H2O. In terms of biological role, involved in unsaturated fatty acids biosynthesis. Catalyzes the dehydration of short chain beta-hydroxyacyl-ACPs and long chain saturated and unsaturated beta-hydroxyacyl-ACPs. The sequence is that of 3-hydroxyacyl-[acyl-carrier-protein] dehydratase FabZ from Streptococcus agalactiae serotype III (strain NEM316).